The primary structure comprises 1024 residues: Beta-galactosidase (1024 aa).

Substrate is bound by residues asparagine 103 and aspartate 202. Aspartate 202 contacts Na(+). 3 residues coordinate Mg(2+): glutamate 417, histidine 419, and glutamate 462. Residues glutamate 462 and 538-541 each bind substrate; that span reads EYAH. Catalysis depends on glutamate 462, which acts as the Proton donor. The active-site Nucleophile is glutamate 538. Mg(2+) is bound at residue asparagine 598. The Na(+) site is built by phenylalanine 602 and asparagine 605. Substrate-binding residues include asparagine 605 and tryptophan 1000.

This sequence belongs to the glycosyl hydrolase 2 family. As to quaternary structure, homotetramer. Mg(2+) serves as cofactor. The cofactor is Na(+).

It catalyses the reaction Hydrolysis of terminal non-reducing beta-D-galactose residues in beta-D-galactosides.. This Escherichia coli (strain SMS-3-5 / SECEC) protein is Beta-galactosidase.